The sequence spans 246 residues: ATP synthase subunit b 1 (246 aa).

The chain crosses the membrane as a helical span at residues 5–27 (WFTFTAQVINFLVLVGLLRYFLY).

The protein belongs to the ATPase B chain family. As to quaternary structure, F-type ATPases have 2 components, F(1) - the catalytic core - and F(0) - the membrane proton channel. F(1) has five subunits: alpha(3), beta(3), gamma(1), delta(1), epsilon(1). F(0) has three main subunits: a(1), b(2) and c(10-14). The alpha and beta chains form an alternating ring which encloses part of the gamma chain. F(1) is attached to F(0) by a central stalk formed by the gamma and epsilon chains, while a peripheral stalk is formed by the delta and b chains.

It is found in the cell inner membrane. F(1)F(0) ATP synthase produces ATP from ADP in the presence of a proton or sodium gradient. F-type ATPases consist of two structural domains, F(1) containing the extramembraneous catalytic core and F(0) containing the membrane proton channel, linked together by a central stalk and a peripheral stalk. During catalysis, ATP synthesis in the catalytic domain of F(1) is coupled via a rotary mechanism of the central stalk subunits to proton translocation. Functionally, component of the F(0) channel, it forms part of the peripheral stalk, linking F(1) to F(0). This Rhodopirellula baltica (strain DSM 10527 / NCIMB 13988 / SH1) protein is ATP synthase subunit b 1.